The following is a 325-amino-acid chain: Beta-ketoacyl-[acyl-carrier-protein] synthase III (325 aa).

Catalysis depends on residues cysteine 119 and histidine 252. Positions 253–257 are ACP-binding; that stretch reads QANIR. Asparagine 282 is a catalytic residue.

This sequence belongs to the thiolase-like superfamily. FabH family. Homodimer.

The protein localises to the cytoplasm. The catalysed reaction is malonyl-[ACP] + acetyl-CoA + H(+) = 3-oxobutanoyl-[ACP] + CO2 + CoA. The protein operates within lipid metabolism; fatty acid biosynthesis. In terms of biological role, catalyzes the condensation reaction of fatty acid synthesis by the addition to an acyl acceptor of two carbons from malonyl-ACP. Catalyzes the first condensation reaction which initiates fatty acid synthesis and may therefore play a role in governing the total rate of fatty acid production. Possesses both acetoacetyl-ACP synthase and acetyl transacylase activities. Its substrate specificity determines the biosynthesis of branched-chain and/or straight-chain of fatty acids. In Paracidovorax citrulli (strain AAC00-1) (Acidovorax citrulli), this protein is Beta-ketoacyl-[acyl-carrier-protein] synthase III.